Here is a 418-residue protein sequence, read N- to C-terminus: Light-independent protochlorophyllide reductase subunit N (418 aa).

Residues Cys-17, Cys-42, and Cys-103 each contribute to the [4Fe-4S] cluster site.

This sequence belongs to the BchN/ChlN family. As to quaternary structure, protochlorophyllide reductase is composed of three subunits; ChlL, ChlN and ChlB. Forms a heterotetramer of two ChlB and two ChlN subunits. The cofactor is [4Fe-4S] cluster.

The enzyme catalyses chlorophyllide a + oxidized 2[4Fe-4S]-[ferredoxin] + 2 ADP + 2 phosphate = protochlorophyllide a + reduced 2[4Fe-4S]-[ferredoxin] + 2 ATP + 2 H2O. It participates in porphyrin-containing compound metabolism; chlorophyll biosynthesis (light-independent). Component of the dark-operative protochlorophyllide reductase (DPOR) that uses Mg-ATP and reduced ferredoxin to reduce ring D of protochlorophyllide (Pchlide) to form chlorophyllide a (Chlide). This reaction is light-independent. The NB-protein (ChlN-ChlB) is the catalytic component of the complex. The chain is Light-independent protochlorophyllide reductase subunit N from Prochlorococcus marinus (strain MIT 9303).